Here is a 339-residue protein sequence, read N- to C-terminus: 2-deoxy-scyllo-inosamine dehydrogenase (339 aa).

Positions 37, 59, 88, 91, 94, 102, and 143 each coordinate Zn(2+).

It belongs to the zinc-containing alcohol dehydrogenase family. DOIA dehydrogenase subfamily. It depends on Zn(2+) as a cofactor.

The enzyme catalyses 2-deoxy-scyllo-inosamine + NADP(+) = 3-amino-2,3-dideoxy-scyllo-inosose + NADPH + H(+). It carries out the reaction 2-deoxy-scyllo-inosamine + NAD(+) = 3-amino-2,3-dideoxy-scyllo-inosose + NADH + H(+). The protein operates within metabolic intermediate biosynthesis; 2-deoxystreptamine biosynthesis; 2-deoxystreptamine from D-glucose 6-phosphate: step 3/4. It participates in antibiotic biosynthesis; tobramycin biosynthesis. Its function is as follows. Catalyzes the oxidation of 2-deoxy-scyllo-inosamine (DOIA) with NAD(+) or NADP(+), forming 3-amino-2,3-dideoxy-scyllo-inosose (amino-DOI). In Streptoalloteichus tenebrarius (strain ATCC 17920 / DSM 40477 / JCM 4838 / CBS 697.72 / NBRC 16177 / NCIMB 11028 / NRRL B-12390 / A12253. 1 / ISP 5477) (Streptomyces tenebrarius), this protein is 2-deoxy-scyllo-inosamine dehydrogenase (tobE).